Here is a 453-residue protein sequence, read N- to C-terminus: AP-4 complex subunit mu-1 (453 aa).

An MHD domain is found at 184–452 (KNEVFLDVVE…LSHSDAYVIR (269 aa)).

Belongs to the adaptor complexes medium subunit family. Adaptor protein complex 4 (AP-4) is a heterotetramer composed of two large adaptins (epsilon-type subunit AP4E1 and beta-type subunit AP4B1), a medium adaptin (mu-type subunit AP4M1) and a small adaptin (sigma-type AP4S1). Interacts with tyrosine-based sorting signals on the cytoplasmic tail of cargo proteins such as APP, ATG9A, LAMP2 and NAGPA. Interacts with the C-terminal domain of GRID2. Interacts with GRIA1 and GRIA2; the interaction is indirect via CACNG3. Interacts with CACNG3; CACNG3 associates GRIA1 and GRIA2 with the adaptor protein complex 4 (AP-4) to target them to the somatodendritic compartment of neurons. Interacts with HOOK1 and HOOK2; the interactions are direct, mediate the interaction between FTS-Hook-FHIP (FHF) complex and AP-4 and the perinuclear distribution of AP-4. Ubiquitous. Highly expressed in testis and lowly expressed in brain and lung.

It is found in the golgi apparatus. The protein localises to the trans-Golgi network membrane. Its subcellular location is the early endosome. Its function is as follows. Component of the adaptor protein complex 4 (AP-4). Adaptor protein complexes are vesicle coat components involved both in vesicle formation and cargo selection. They control the vesicular transport of proteins in different trafficking pathways. AP-4 forms a non clathrin-associated coat on vesicles departing the trans-Golgi network (TGN) and may be involved in the targeting of proteins from the trans-Golgi network (TGN) to the endosomal-lysosomal system. It is also involved in protein sorting to the basolateral membrane in epithelial cells and the proper asymmetric localization of somatodendritic proteins in neurons. Within AP-4, the mu-type subunit AP4M1 is directly involved in the recognition and binding of tyrosine-based sorting signals found in the cytoplasmic part of cargos. The adaptor protein complex 4 (AP-4) may also recognize other types of sorting signal. In Homo sapiens (Human), this protein is AP-4 complex subunit mu-1.